The chain runs to 433 residues: GTPase Der (433 aa).

EngA-type G domains are found at residues 3-167 (NIVA…QDTI) and 174-349 (PKIA…TNKT). GTP contacts are provided by residues 9–16 (GRPNVGKS), 56–60 (DTGGY), 119–122 (NKAD), 180–187 (GRPNVGKS), 227–231 (DTAGI), and 292–295 (NKWD). Residues 350–433 (QKISTAALNQ…VPVQLVFRKK (84 aa)) form the KH-like domain.

This sequence belongs to the TRAFAC class TrmE-Era-EngA-EngB-Septin-like GTPase superfamily. EngA (Der) GTPase family. As to quaternary structure, associates with the 50S ribosomal subunit.

GTPase that plays an essential role in the late steps of ribosome biogenesis. In Amoebophilus asiaticus (strain 5a2), this protein is GTPase Der.